We begin with the raw amino-acid sequence, 446 residues long: Adenylosuccinate synthetase (446 aa).

GTP-binding positions include 12–18 (GDEGKGK) and 40–42 (GHT). D13 acts as the Proton acceptor in catalysis. Mg(2+) is bound by residues D13 and G40. IMP is bound by residues 13-16 (DEGK), 38-41 (NAGH), T128, R142, Q223, T238, and R302. H41 functions as the Proton donor in the catalytic mechanism. Substrate is bound at residue 298–304 (TTTGRRR). Residues R304, 330–332 (KLD), and 412–414 (SLG) contribute to the GTP site.

Belongs to the adenylosuccinate synthetase family. In terms of assembly, homodimer. The cofactor is Mg(2+).

It localises to the cytoplasm. It catalyses the reaction IMP + L-aspartate + GTP = N(6)-(1,2-dicarboxyethyl)-AMP + GDP + phosphate + 2 H(+). The protein operates within purine metabolism; AMP biosynthesis via de novo pathway; AMP from IMP: step 1/2. Its function is as follows. Plays an important role in the de novo pathway of purine nucleotide biosynthesis. Catalyzes the first committed step in the biosynthesis of AMP from IMP. In Acaryochloris marina (strain MBIC 11017), this protein is Adenylosuccinate synthetase.